Consider the following 94-residue polypeptide: Small ribosomal subunit protein uS17 (94 aa).

A disordered region spans residues 1 to 22; it reads MSEQTSAASTTDRGDRKTRRGY.

This sequence belongs to the universal ribosomal protein uS17 family. In terms of assembly, part of the 30S ribosomal subunit.

One of the primary rRNA binding proteins, it binds specifically to the 5'-end of 16S ribosomal RNA. This Kineococcus radiotolerans (strain ATCC BAA-149 / DSM 14245 / SRS30216) protein is Small ribosomal subunit protein uS17.